The chain runs to 811 residues: Beta-catenin homolog sys-1 (811 aa).

The segment at 1 to 105 (MHSTGEPQRG…SRGPAAPAQN (105 aa)) is disordered. The span at 64 to 103 (QQQQMTPQALSTQQQQQVQQQQQRQLYSSPSPSRGPAAPA) shows a compositional bias: low complexity.

In terms of assembly, interacts with TCF transcription factor pop-1 (via N-terminal region); interaction is direct.

It localises to the nucleus. The protein resides in the cytoplasm. The protein localises to the cytoplasmic granule. It is found in the cytoskeleton. Its subcellular location is the microtubule organizing center. It localises to the centrosome. The protein resides in the chromosome. The protein localises to the centromere. It is found in the kinetochore. Functionally, transcription coregulator. Part of the Wnt signaling asymmetry pathway, probably acting downstream of putative frizzled ligand mom-2, Wnt/frizzled receptors lin-17 and mom-5, and dishevelled homolog dsh-2. Activates or represses target gene expression, depending on upstream Wnt signals and interactions with transcription factors, such as pop-1. Required for the activation of Wnt-responsive genes in the E blastomere; thereby leading to a role in endoderm specification and gut development. Reciprocal distribution patterns of sys-1 and pop-1/TCF in the daughters of anterior-posterior cell divisions functions in specifying cell fate; a higher sys-1 to pop-1 ratio promotes the posterior cell fate, whereas a low sys-1 to pop-1 ratio promotes the anterior fate. Represses expression of homeobox ttx-3 in neuroblasts of the SIAD/SIBV lineage, perhaps acting by blocking its transcriptional activation by a complex consisting of ref-2 and pop-1. Required for early organization of the hermaphrodite, but not the male, gonad; involved in generation of regulatory cells, known as the distal tip cells (DTC), and in formation of the somatic gonadal primordium. Involved in regulating asymmetric divisions of the somatic gonadal precursor cells (SGP), Z1 and Z4. This is Beta-catenin homolog sys-1 from Caenorhabditis elegans.